A 339-amino-acid polypeptide reads, in one-letter code: Tetraacyldisaccharide 4'-kinase (339 aa).

Residue 62 to 69 (VAGGTGKT) participates in ATP binding.

This sequence belongs to the LpxK family.

It catalyses the reaction a lipid A disaccharide + ATP = a lipid IVA + ADP + H(+). The protein operates within glycolipid biosynthesis; lipid IV(A) biosynthesis; lipid IV(A) from (3R)-3-hydroxytetradecanoyl-[acyl-carrier-protein] and UDP-N-acetyl-alpha-D-glucosamine: step 6/6. In terms of biological role, transfers the gamma-phosphate of ATP to the 4'-position of a tetraacyldisaccharide 1-phosphate intermediate (termed DS-1-P) to form tetraacyldisaccharide 1,4'-bis-phosphate (lipid IVA). The polypeptide is Tetraacyldisaccharide 4'-kinase (Xylella fastidiosa (strain M12)).